The following is a 398-amino-acid chain: Probable aminomethyltransferase (398 aa).

It belongs to the GcvT family. The glycine cleavage system is composed of four proteins: P, T, L and H.

It carries out the reaction N(6)-[(R)-S(8)-aminomethyldihydrolipoyl]-L-lysyl-[protein] + (6S)-5,6,7,8-tetrahydrofolate = N(6)-[(R)-dihydrolipoyl]-L-lysyl-[protein] + (6R)-5,10-methylene-5,6,7,8-tetrahydrofolate + NH4(+). Functionally, the glycine cleavage system catalyzes the degradation of glycine. This is Probable aminomethyltransferase from Thermococcus kodakarensis (strain ATCC BAA-918 / JCM 12380 / KOD1) (Pyrococcus kodakaraensis (strain KOD1)).